Here is a 264-residue protein sequence, read N- to C-terminus: Thiazole synthase (264 aa).

The Schiff-base intermediate with DXP role is filled by Lys-101. 1-deoxy-D-xylulose 5-phosphate-binding positions include Gly-162, 188–189, and 210–211; these read AG and NT.

It belongs to the ThiG family. As to quaternary structure, homotetramer. Forms heterodimers with either ThiH or ThiS.

It is found in the cytoplasm. It catalyses the reaction [ThiS sulfur-carrier protein]-C-terminal-Gly-aminoethanethioate + 2-iminoacetate + 1-deoxy-D-xylulose 5-phosphate = [ThiS sulfur-carrier protein]-C-terminal Gly-Gly + 2-[(2R,5Z)-2-carboxy-4-methylthiazol-5(2H)-ylidene]ethyl phosphate + 2 H2O + H(+). The protein operates within cofactor biosynthesis; thiamine diphosphate biosynthesis. In terms of biological role, catalyzes the rearrangement of 1-deoxy-D-xylulose 5-phosphate (DXP) to produce the thiazole phosphate moiety of thiamine. Sulfur is provided by the thiocarboxylate moiety of the carrier protein ThiS. In vitro, sulfur can be provided by H(2)S. This chain is Thiazole synthase, found in Chromobacterium violaceum (strain ATCC 12472 / DSM 30191 / JCM 1249 / CCUG 213 / NBRC 12614 / NCIMB 9131 / NCTC 9757 / MK).